A 617-amino-acid chain; its full sequence is D-glucuronyl C5-epimerase (617 aa).

Residues 1 to 11 (MRCLAARVNYK) are Cytoplasmic-facing. A helical; Signal-anchor for type II membrane protein transmembrane segment spans residues 12–28 (TLIIICALFTLVTVLLW). Residues 29–617 (NKCSSDKAIQ…YLKGSRAKHN (589 aa)) lie on the Lumenal side of the membrane. Substrate contacts are provided by residues tyrosine 179, 184–186 (RDR), glutamine 201, tyrosine 209, glutamine 212, and glutamine 215. Ca(2+)-binding residues include threonine 237, glutamate 239, threonine 268, asparagine 269, and aspartate 392. Residues 429-432 (KLGE), 499-500 (EY), asparagine 510, tyrosine 514, tyrosine 560, arginine 563, and 572-581 (NLARWDYHTT) contribute to the substrate site.

The protein belongs to the D-glucuronyl C5-epimerase family. Homodimer. Interacts with HS2ST1.

The protein localises to the golgi apparatus membrane. It carries out the reaction [heparosan-N-sulfate](n) = [heparan-N-sulfate](n). The protein operates within glycan metabolism; heparan sulfate biosynthesis. It participates in glycan metabolism; heparin biosynthesis. Functionally, converts D-glucuronic acid residues adjacent to N-sulfate sugar residues to L-iduronic acid residues, both in maturing heparan sulfate (HS) and heparin chains. This is important for further modifications that determine the specificity of interactions between these glycosaminoglycans and proteins. This is D-glucuronyl C5-epimerase (GLCE) from Bos taurus (Bovine).